A 126-amino-acid chain; its full sequence is Glycine cleavage system H protein (126 aa).

A Lipoyl-binding domain is found at 22 to 104 (IATVGITAFA…YGRGWLFKVE (83 aa)). At Lys-63 the chain carries N6-lipoyllysine.

Belongs to the GcvH family. As to quaternary structure, the glycine cleavage system is composed of four proteins: P, T, L and H. (R)-lipoate serves as cofactor.

Functionally, the glycine cleavage system catalyzes the degradation of glycine. The H protein shuttles the methylamine group of glycine from the P protein to the T protein. This is Glycine cleavage system H protein from Thermobifida fusca (strain YX).